Consider the following 432-residue polypeptide: Adenosylhomocysteinase (432 aa).

Residues T56, D131, and E156 each contribute to the substrate site. T157–T159 serves as a coordination point for NAD(+). Substrate is bound by residues K186 and D190. NAD(+) contacts are provided by residues N191, G222 to G227, E243, I299 to H301, and N346.

It belongs to the adenosylhomocysteinase family. It depends on NAD(+) as a cofactor.

It catalyses the reaction S-adenosyl-L-homocysteine + H2O = L-homocysteine + adenosine. The protein operates within amino-acid biosynthesis; L-homocysteine biosynthesis; L-homocysteine from S-adenosyl-L-homocysteine: step 1/1. Functionally, adenosylhomocysteine is a competitive inhibitor of S-adenosyl-L-methionine-dependent methyl transferase reactions; therefore adenosylhomocysteinase may play a key role in the control of methylations via regulation of the intracellular concentration of adenosylhomocysteine. The protein is Adenosylhomocysteinase (Ahcy13) of Anopheles gambiae (African malaria mosquito).